The sequence spans 263 residues: Type III pantothenate kinase (263 aa).

6 to 13 is a binding site for ATP; that stretch reads DVGNTNIK. A substrate-binding site is contributed by 108 to 111; it reads GSDR. Asp-110 serves as the catalytic Proton acceptor. Residue Asp-131 participates in K(+) binding. Thr-134 is an ATP binding site. Residue Thr-187 coordinates substrate.

Belongs to the type III pantothenate kinase family. In terms of assembly, homodimer. Requires NH4(+) as cofactor. The cofactor is K(+).

The protein localises to the cytoplasm. It catalyses the reaction (R)-pantothenate + ATP = (R)-4'-phosphopantothenate + ADP + H(+). It participates in cofactor biosynthesis; coenzyme A biosynthesis; CoA from (R)-pantothenate: step 1/5. In terms of biological role, catalyzes the phosphorylation of pantothenate (Pan), the first step in CoA biosynthesis. This Anaplasma phagocytophilum (strain HZ) protein is Type III pantothenate kinase.